The chain runs to 142 residues: Nucleoside diphosphate kinase (142 aa).

ATP-binding residues include Lys-11, Phe-59, Arg-87, Thr-93, Arg-104, and Asn-114. His-117 functions as the Pros-phosphohistidine intermediate in the catalytic mechanism.

Belongs to the NDK family. As to quaternary structure, homotetramer. Requires Mg(2+) as cofactor.

The protein localises to the cytoplasm. It catalyses the reaction a 2'-deoxyribonucleoside 5'-diphosphate + ATP = a 2'-deoxyribonucleoside 5'-triphosphate + ADP. The catalysed reaction is a ribonucleoside 5'-diphosphate + ATP = a ribonucleoside 5'-triphosphate + ADP. Functionally, major role in the synthesis of nucleoside triphosphates other than ATP. The ATP gamma phosphate is transferred to the NDP beta phosphate via a ping-pong mechanism, using a phosphorylated active-site intermediate. This Dechloromonas aromatica (strain RCB) protein is Nucleoside diphosphate kinase.